The following is a 289-amino-acid chain: Protoheme IX farnesyltransferase (289 aa).

A run of 9 helical transmembrane segments spans residues 9–29 (VALM…PVMM), 40–60 (LIAV…TINC), 89–109 (LTFG…LVNW), 110–130 (PSAL…TLGL), 134–154 (TPSN…IGWS), 155–175 (AVTG…FFWT), 190–209 (YAAA…VVTR), 228–248 (VAST…WFLV), and 269–289 (FHMS…TALV).

This sequence belongs to the UbiA prenyltransferase family. Protoheme IX farnesyltransferase subfamily.

Its subcellular location is the cell membrane. It catalyses the reaction heme b + (2E,6E)-farnesyl diphosphate + H2O = Fe(II)-heme o + diphosphate. Its pathway is porphyrin-containing compound metabolism; heme O biosynthesis; heme O from protoheme: step 1/1. Functionally, converts heme B (protoheme IX) to heme O by substitution of the vinyl group on carbon 2 of heme B porphyrin ring with a hydroxyethyl farnesyl side group. The chain is Protoheme IX farnesyltransferase from Frankia casuarinae (strain DSM 45818 / CECT 9043 / HFP020203 / CcI3).